The chain runs to 538 residues: Zinc finger protein with KRAB and SCAN domains 3 (538 aa).

Serine 42 carries the post-translational modification Phosphoserine. The SCAN box domain maps to 46 to 128 (RERFRGFRYP…VLLEYLERQL (83 aa)). Lysine 171 participates in a covalent cross-link: Glycyl lysine isopeptide (Lys-Gly) (interchain with G-Cter in SUMO2). Position 207 is a phosphothreonine (threonine 207). In terms of domain architecture, KRAB spans 214-274 (LKVEDVALTL…PAEELPEKEH (61 aa)). Residues 226–236 (EWTQQDSSQGN) are compositionally biased toward polar residues. A disordered region spans residues 226-274 (EWTQQDSSQGNLCRDEKQENHGSLVSLGDEKQTKSRDLPPAEELPEKEH). The segment covering 253 to 274 (GDEKQTKSRDLPPAEELPEKEH) has biased composition (basic and acidic residues). 5 consecutive C2H2-type zinc fingers follow at residues 314–336 (HICH…RRIH), 342–364 (YECE…QRVH), 370–392 (YECE…QRTH), 398–420 (YECD…HRIH), and 426–448 (YQCS…QRIH). Threonine 449 is modified (phosphothreonine). 2 consecutive C2H2-type zinc fingers follow at residues 480–502 (YKCN…QKIH) and 508–530 (YQCN…QRSH).

It belongs to the krueppel C2H2-type zinc-finger protein family.

The protein resides in the nucleus. It localises to the cytoplasm. Functionally, transcriptional factor that binds to the consensus sequence 5'-[GT][AG][AGT]GGGG-3' and acts as a repressor of autophagy. Specifically represses expression of genes involved in autophagy and lysosome biogenesis/function such as MAP1LC3B, ULK1 or WIPI2. Associates with chromatin at the ITGB4 and VEGF promoters. Also acts as a transcription activator and promotes cancer cell progression and/or migration in various tumors and myelomas. In Homo sapiens (Human), this protein is Zinc finger protein with KRAB and SCAN domains 3 (ZKSCAN3).